Reading from the N-terminus, the 496-residue chain is UDP-N-acetylmuramate--L-alanine ligase (496 aa).

Residue 122–128 (GTHGKTT) participates in ATP binding.

This sequence belongs to the MurCDEF family.

It is found in the cytoplasm. It carries out the reaction UDP-N-acetyl-alpha-D-muramate + L-alanine + ATP = UDP-N-acetyl-alpha-D-muramoyl-L-alanine + ADP + phosphate + H(+). Its pathway is cell wall biogenesis; peptidoglycan biosynthesis. Functionally, cell wall formation. In Mycolicibacterium paratuberculosis (strain ATCC BAA-968 / K-10) (Mycobacterium paratuberculosis), this protein is UDP-N-acetylmuramate--L-alanine ligase.